The following is a 565-amino-acid chain: Probable 2-isopropylmalate synthase (565 aa).

A compositionally biased stretch (low complexity) spans 1–15 (MPTKTSTPSSQSPKL). Residues 1-21 (MPTKTSTPSSQSPKLSHLRPQ) are disordered. Residues 33-306 (VRILDTTLRD…YTRINTRHIL (274 aa)) enclose the Pyruvate carboxyltransferase domain. The a divalent metal cation site is built by Asp-42, His-239, His-241, and Asn-275.

Belongs to the alpha-IPM synthase/homocitrate synthase family. LeuA type 1 subfamily. Homodimer. A divalent metal cation is required as a cofactor. In terms of tissue distribution, exclusively expressed in mature nodules.

It carries out the reaction 3-methyl-2-oxobutanoate + acetyl-CoA + H2O = (2S)-2-isopropylmalate + CoA + H(+). In terms of biological role, catalyzes the condensation of the acetyl group of acetyl-CoA with 3-methyl-2-oxobutanoate (2-oxoisovalerate) to form 3-carboxy-3-hydroxy-4-methylpentanoate (2-isopropylmalate). May play an important role in symbiotic nitrogen fixation. This is Probable 2-isopropylmalate synthase (GMN56) from Glycine max (Soybean).